The primary structure comprises 101 residues: Integration host factor subunit beta (101 aa).

It belongs to the bacterial histone-like protein family. In terms of assembly, heterodimer of an alpha and a beta chain.

In terms of biological role, this protein is one of the two subunits of integration host factor, a specific DNA-binding protein that functions in genetic recombination as well as in transcriptional and translational control. The chain is Integration host factor subunit beta from Rhodopseudomonas palustris (strain BisB5).